Here is a 124-residue protein sequence, read N- to C-terminus: Small ribosomal subunit protein uS12 (124 aa).

Asp89 carries the post-translational modification 3-methylthioaspartic acid. The segment at 104–124 is disordered; sequence TDGVENRKQSRSKYGTKRPKK. Positions 112–124 are enriched in basic residues; that stretch reads QSRSKYGTKRPKK.

The protein belongs to the universal ribosomal protein uS12 family. In terms of assembly, part of the 30S ribosomal subunit. Contacts proteins S8 and S17. May interact with IF1 in the 30S initiation complex.

Its function is as follows. With S4 and S5 plays an important role in translational accuracy. Functionally, interacts with and stabilizes bases of the 16S rRNA that are involved in tRNA selection in the A site and with the mRNA backbone. Located at the interface of the 30S and 50S subunits, it traverses the body of the 30S subunit contacting proteins on the other side and probably holding the rRNA structure together. The combined cluster of proteins S8, S12 and S17 appears to hold together the shoulder and platform of the 30S subunit. The polypeptide is Small ribosomal subunit protein uS12 (Thermosipho melanesiensis (strain DSM 12029 / CIP 104789 / BI429)).